A 139-amino-acid polypeptide reads, in one-letter code: Large ribosomal subunit protein uL22c (139 aa).

The protein belongs to the universal ribosomal protein uL22 family. Part of the 50S ribosomal subunit.

It localises to the plastid. The protein localises to the chloroplast. In terms of biological role, this protein binds specifically to 23S rRNA. Functionally, the globular domain of the protein is located near the polypeptide exit tunnel on the outside of the subunit, while an extended beta-hairpin is found that lines the wall of the exit tunnel in the center of the 70S ribosome. The sequence is that of Large ribosomal subunit protein uL22c (rpl22) from Cycas taitungensis (Prince sago).